A 497-amino-acid chain; its full sequence is Zinc finger CCCH domain-containing protein 22 (497 aa).

The segment at 136 to 163 (SESMMICKFFMQQRCRFGSSCRSSHGLD) adopts a C3H1-type zinc-finger fold. The disordered stretch occupies residues 236-281 (AQMTDDDGEEEEEEDEQQSASDSEDSVSSDYDEGSPQGIGFLESTN). Residues 239–268 (TDDDGEEEEEEDEQQSASDSEDSVSSDYDE) show a composition bias toward acidic residues. In terms of domain architecture, G-patch spans 300–346 (TRGIASKMMASMGYREGMGLGVSGQGILNPILVKVLPAKRSLDYALE). A disordered region spans residues 352-387 (ECKSEKQKKKRSRGGKRKRGKKFAEAAKAAKQEEES). Residues 357–372 (KQKKKRSRGGKRKRGK) show a composition bias toward basic residues. Positions 373 to 387 (KFAEAAKAAKQEEES) are enriched in basic and acidic residues.

This Arabidopsis thaliana (Mouse-ear cress) protein is Zinc finger CCCH domain-containing protein 22.